The primary structure comprises 320 residues: ATP-dependent 6-phosphofructokinase (320 aa).

G12 is a binding site for ATP. ADP contacts are provided by residues 22-26 (RSVVR) and 55-60 (RYSVSD). ATP-binding positions include 73–74 (RF) and 103–106 (GDGS). Mg(2+) is bound at residue D104. 126 to 128 (TID) serves as a coordination point for substrate. D128 serves as the catalytic Proton acceptor. ADP is bound at residue R155. Substrate contacts are provided by residues R163 and 170 to 172 (MGR). ADP is bound by residues 186–188 (GCE) and 214–216 (KKH). Residues E223, R244, and 250-253 (HIQR) each bind substrate.

It belongs to the phosphofructokinase type A (PFKA) family. ATP-dependent PFK group I subfamily. Prokaryotic clade 'B1' sub-subfamily. As to quaternary structure, homotetramer. It depends on Mg(2+) as a cofactor.

The protein localises to the cytoplasm. The enzyme catalyses beta-D-fructose 6-phosphate + ATP = beta-D-fructose 1,6-bisphosphate + ADP + H(+). The protein operates within carbohydrate degradation; glycolysis; D-glyceraldehyde 3-phosphate and glycerone phosphate from D-glucose: step 3/4. Its activity is regulated as follows. Allosterically activated by ADP and other diphosphonucleosides, and allosterically inhibited by phosphoenolpyruvate. Functionally, catalyzes the phosphorylation of D-fructose 6-phosphate to fructose 1,6-bisphosphate by ATP, the first committing step of glycolysis. This Baumannia cicadellinicola subsp. Homalodisca coagulata protein is ATP-dependent 6-phosphofructokinase.